The chain runs to 521 residues: MSVRPFESPPPYRPDEFKPNHYAPSNDMYGGEMHVRPMLSQPAYSFYPEDEILHFYKWTSPPGVIRILSMLIIVMCIAIFACVASTLAWDRGYGTGLFGGSLNYPYSGFGYGGGYGGGYGGYGYGYGGYTDPRAAKGFLLAMAAFCFIASLVIFVTSVIRSGMSRTRRYYLIVIIVSAILGIMVFIATIVYIMGVNPTAQASGSMYGSQIYMICNQFYTPGGTGLYVDQYLYHYCVVDPQEAIAIVLGFMIIVAFALIIFFAVKTRRKMDRYDKSNILWDKEHIYDEQPPNVEEWVKNVSAGTQDMPPPPSDYAERVDSPMAYSSNGKVNGKRSYPESFYKSTPLVPEVAQEIPLTLSVDDFRQPRYSSNGNLETPSKRAPTKGKAGKGKRTDPDHYETDYTTGGESCEELEEDWVREYPPITSDQQRQLYKRNFDAGLQEYKSLQAELDDVNKELSRLDKELDDYREESEEYMAAADEYNRLKQVKGSADYKSKRNYCKQLKSKLSHIKRMVGDYDRRKP.

The disordered stretch occupies residues 1–20 (MSVRPFESPPPYRPDEFKPN). Residues 1–66 (MSVRPFESPP…KWTSPPGVIR (66 aa)) are Cytoplasmic-facing. One can recognise an MARVEL domain in the interval 60-267 (SPPGVIRILS…IIFFAVKTRR (208 aa)). Residues 67 to 89 (ILSMLIIVMCIAIFACVASTLAW) traverse the membrane as a helical segment. The Extracellular portion of the chain corresponds to 90–133 (DRGYGTGLFGGSLNYPYSGFGYGGGYGGGYGGYGYGYGGYTDPR). The helical transmembrane segment at 134 to 158 (AAKGFLLAMAAFCFIASLVIFVTSV) threads the bilayer. Residues 159–168 (IRSGMSRTRR) are Cytoplasmic-facing. Residues 169–193 (YYLIVIIVSAILGIMVFIATIVYIM) form a helical membrane-spanning segment. Topologically, residues 194–241 (GVNPTAQASGSMYGSQIYMICNQFYTPGGTGLYVDQYLYHYCVVDPQE) are extracellular. A disulfide bond links Cys-214 and Cys-235. A helical membrane pass occupies residues 242 to 263 (AIAIVLGFMIIVAFALIIFFAV). Over 264-521 (KTRRKMDRYD…MVGDYDRRKP (258 aa)) the chain is Cytoplasmic. Ser-300 is modified (phosphoserine). Residues 300 to 329 (SAGTQDMPPPPSDYAERVDSPMAYSSNGKV) form a disordered region. Thr-303 carries the phosphothreonine modification. A phosphoserine mark is found at Ser-311 and Ser-319. Ser-338 carries the post-translational modification Phosphoserine; by PKC; in vitro. Residue Ser-358 is modified to Phosphoserine. Residues 361–405 (DFRQPRYSSNGNLETPSKRAPTKGKAGKGKRTDPDHYETDYTTGG) form a disordered region. The span at 366–375 (RYSSNGNLET) shows a compositional bias: polar residues. A Phosphotyrosine modification is found at Tyr-367. Phosphoserine is present on residues Ser-368 and Ser-369. Residues 380 to 389 (APTKGKAGKG) are compositionally biased toward basic residues. Over residues 390 to 399 (KRTDPDHYET) the composition is skewed to basic and acidic residues. Tyr-397 and Tyr-401 each carry phosphotyrosine. Residue Thr-402 is modified to Phosphothreonine; by PKC/PRKCH. A Phosphothreonine modification is found at Thr-403. The residue at position 407 (Ser-407) is a Phosphoserine. Residues 413 to 521 (EDWVREYPPI…MVGDYDRRKP (109 aa)) form the OCEL domain. Residues 424 to 488 (SDQQRQLYKR…EYNRLKQVKG (65 aa)) are a coiled coil. The residue at position 489 (Ser-489) is a Phosphoserine.

This sequence belongs to the ELL/occludin family. In terms of assembly, interacts with TJP1/ZO1. Interacts with VAPA. Interacts with CLDN1, CLDN6, CLDN9, CLDN11, CLDN12 and CLDN17. Interacts with PLSCR1. Interacts with LSR, ILDR1 and ILDR2. Interacts with TJP2/ZO2. Dephosphorylated by PTPRJ. May be phosphorylated by PKC during translocation to cell-cell contacts. Localized at tight junctions of both epithelial and endothelial cells. Highly expressed in the testis, kidney, lung, liver and brain. Not detected in skeletal muscle, spleen and heart.

The protein resides in the cell membrane. It is found in the cell junction. Its subcellular location is the tight junction. Its function is as follows. May play a role in the formation and regulation of the tight junction (TJ) paracellular permeability barrier. This Mus musculus (Mouse) protein is Occludin (Ocln).